The chain runs to 257 residues: 3-deoxy-manno-octulosonate cytidylyltransferase (257 aa).

Belongs to the KdsB family.

It localises to the cytoplasm. The enzyme catalyses 3-deoxy-alpha-D-manno-oct-2-ulosonate + CTP = CMP-3-deoxy-beta-D-manno-octulosonate + diphosphate. It functions in the pathway nucleotide-sugar biosynthesis; CMP-3-deoxy-D-manno-octulosonate biosynthesis; CMP-3-deoxy-D-manno-octulosonate from 3-deoxy-D-manno-octulosonate and CTP: step 1/1. Its pathway is bacterial outer membrane biogenesis; lipopolysaccharide biosynthesis. Activates KDO (a required 8-carbon sugar) for incorporation into bacterial lipopolysaccharide in Gram-negative bacteria. In Methylococcus capsulatus (strain ATCC 33009 / NCIMB 11132 / Bath), this protein is 3-deoxy-manno-octulosonate cytidylyltransferase.